The following is a 1408-amino-acid chain: ARF guanine-nucleotide exchange factor 1 (1408 aa).

S49 bears the Phosphoserine mark. The tract at residues 262–287 is disordered; the sequence is TTTSDNDLSSTDDDSAVADDNKNEKP. One can recognise an SEC7 domain in the interval 552–706; the sequence is FNEKAKKGIQ…IIMLNTDSHN (155 aa).

As to quaternary structure, interacts (via N-terminal region) with SEC21 (via C-terminus). Interacts with GMH1. Interacts with DRS2.

The protein resides in the cytoplasm. The protein localises to the cytosol. Its subcellular location is the membrane. It localises to the endoplasmic reticulum. It is found in the mitochondrion. Activates the ARF proteins by exchanging bound GDP for free GTP. Plays a role in maintaining mitochondrial morphology, and in the turnover of mitochondria through mitophagy. The protein is ARF guanine-nucleotide exchange factor 1 (GEA1) of Saccharomyces cerevisiae (strain ATCC 204508 / S288c) (Baker's yeast).